We begin with the raw amino-acid sequence, 134 residues long: Small ribosomal subunit protein uS11 (134 aa).

Disordered stretches follow at residues 1-24 and 115-134; these read MPPK…VAHG and IQDV…RRRV. Residues 9–18 show a composition bias toward basic residues; it reads AVKKVRRKEK.

This sequence belongs to the universal ribosomal protein uS11 family. Part of the 30S ribosomal subunit. Interacts with proteins S7 and S18. Binds to IF-3.

Its function is as follows. Located on the platform of the 30S subunit, it bridges several disparate RNA helices of the 16S rRNA. Forms part of the Shine-Dalgarno cleft in the 70S ribosome. This is Small ribosomal subunit protein uS11 from Saccharopolyspora erythraea (strain ATCC 11635 / DSM 40517 / JCM 4748 / NBRC 13426 / NCIMB 8594 / NRRL 2338).